We begin with the raw amino-acid sequence, 256 residues long: Cytokine-inducible SH2-containing protein (256 aa).

The region spanning 81–162 (WYWGSITASE…PDVVSLVQHY (82 aa)) is the SH2 domain. Positions 168-190 (ADTRSDSPDPAPTPALPVSKPDA) are disordered. Positions 207–255 (KLVQPFVRRSSARSLQHLCRLVINRLVTDVDCLPLPRRMADYLRQYPFQ) constitute an SOCS box domain.

As to quaternary structure, stably associated with the tyrosine-phosphorylated IL3 receptor beta chain and tyrosine-phosphorylated EPO receptor (EPOR).

The protein operates within protein modification; protein ubiquitination. Functionally, SOCS family proteins form part of a classical negative feedback system that regulates cytokine signal transduction. CIS is involved in the negative regulation of cytokines that signal through the JAK-STAT5 pathway such as erythropoietin, prolactin and interleukin 3 (IL3) receptor. Inhibits STAT5 trans-activation by suppressing its tyrosine phosphorylation. May be a substrate recognition component of a SCF-like ECS (Elongin BC-CUL2/5-SOCS-box protein) E3 ubiquitin-protein ligase complex which mediates the ubiquitination and subsequent proteasomal degradation of target proteins. The sequence is that of Cytokine-inducible SH2-containing protein (Cish) from Rattus norvegicus (Rat).